Here is a 382-residue protein sequence, read N- to C-terminus: MATTASNHYNLLGSGSSIVHADPGGMQQAQSYRDAQTLVQSDYTLQSNGHPLSHAHQWITALSHGDGAPWATSPLGQQDIKPTVQSSRDELHVSGTLQHQSRAPHLVHPAHGNHHGPGAWRSTGSTHLSSMASSNGQGLLYSQPSFTVNGMINPGSGQGIHHHGLRDSHDDHHGDHGHQQVSQAQQQHSQLQGGHQDHSDEDTPTSDDLEQFAKQFKQRRIKLGFTQADVGLALGTLYGNVFSQTTICRFEALQLSFKNMCKLKPLLNKWLEEADSSSGSPTSIDKIAAQGRKRKKRTSIEVSVKGALESHFLKCPKPSAPEITSLADSLQLEKEVVRVWFCNRRQKEKRMTPPGGTIPGAEDIYGASRDTPPHLGVQTSVQ.

Disordered regions lie at residues 69–136 (PWAT…SSNG), 150–206 (GMIN…TPTS), and 348–382 (EKRM…TSVQ). Residues 122–136 (STGSTHLSSMASSNG) show a composition bias toward polar residues. Residues 165-178 (LRDSHDDHHGDHGH) show a composition bias toward basic and acidic residues. Residues 179 to 194 (QQVSQAQQQHSQLQGG) are compositionally biased toward low complexity. A POU-specific domain is found at 201 to 275 (EDTPTSDDLE…LLNKWLEEAD (75 aa)). Residues 293–352 (KRKKRTSIEVSVKGALESHFLKCPKPSAPEITSLADSLQLEKEVVRVWFCNRRQKEKRMT) constitute a DNA-binding region (homeobox).

The protein belongs to the POU transcription factor family. Class-3 subfamily. In terms of tissue distribution, expressed in the developing brain and spinal cord. Also found in a restricted region of the auditory vesicle during development. In the adult, expression is restricted to the brain.

The protein localises to the nucleus. In terms of biological role, transcription factor that may be implicated in patterning of the central nervous system during early development. This is POU domain, class 3, transcription factor 2-A (pou3f2-a) from Xenopus laevis (African clawed frog).